The sequence spans 157 residues: Endoribonuclease YbeY (157 aa).

Positions 116, 120, and 126 each coordinate Zn(2+).

Belongs to the endoribonuclease YbeY family. It depends on Zn(2+) as a cofactor.

Its subcellular location is the cytoplasm. Functionally, single strand-specific metallo-endoribonuclease involved in late-stage 70S ribosome quality control and in maturation of the 3' terminus of the 16S rRNA. The protein is Endoribonuclease YbeY of Arthrobacter sp. (strain FB24).